Consider the following 332-residue polypeptide: Anthranilate phosphoribosyltransferase (332 aa).

5-phospho-alpha-D-ribose 1-diphosphate-binding positions include glycine 78, 81–82, serine 86, 88–91, 106–114, and serine 118; these read GD, NIST, and KHGNKSITS. An anthranilate-binding site is contributed by glycine 78. Serine 90 contacts Mg(2+). Residue asparagine 109 participates in anthranilate binding. Arginine 163 contributes to the anthranilate binding site. Positions 222 and 223 each coordinate Mg(2+).

The protein belongs to the anthranilate phosphoribosyltransferase family. Homodimer. Requires Mg(2+) as cofactor.

It carries out the reaction N-(5-phospho-beta-D-ribosyl)anthranilate + diphosphate = 5-phospho-alpha-D-ribose 1-diphosphate + anthranilate. It functions in the pathway amino-acid biosynthesis; L-tryptophan biosynthesis; L-tryptophan from chorismate: step 2/5. Functionally, catalyzes the transfer of the phosphoribosyl group of 5-phosphorylribose-1-pyrophosphate (PRPP) to anthranilate to yield N-(5'-phosphoribosyl)-anthranilate (PRA). In Staphylococcus aureus (strain Mu3 / ATCC 700698), this protein is Anthranilate phosphoribosyltransferase.